A 198-amino-acid chain; its full sequence is Non-structural protein 5 (198 aa).

Over residues 16-30 (SIYKNESSSTTSTLS) the composition is skewed to low complexity. Disordered stretches follow at residues 16–37 (SIYK…IGRS), 53–104 (LSKS…SNVG), and 127–167 (SIST…SDSD). Polar residues-rich tracts occupy residues 64–82 (DSAS…NAVK) and 91–104 (MDSS…SNVG). Phosphoserine; by host CK1 is present on Ser67. Asp92 provides a ligand contact to Mg(2+). Residues 153 to 166 (ESDSDDYVLDDSDS) are compositionally biased toward acidic residues. 4 positions are modified to phosphoserine; by host: Ser154, Ser156, Ser164, and Ser166.

This sequence belongs to the rotavirus NSP5 family. As to quaternary structure, homodimer. Interacts with VP1. Interacts with VP2. Interacts with NSP2; this interaction leads to up-regulation of NSP5 hyperphosphorylation and formation of virus factories. Interacts with NSP6. Participates in the selective exclusion of host proteins from stress granules (SG) and P bodies (PB). Also participates in the sequestration of these remodeled organelles in viral factories. Mg(2+) serves as cofactor. Post-translationally, O-glycosylated. In terms of processing, hyperphosphorylated on serine residues, when in dimeric form. Phosphorylation by host CK1 is required for the hyperphosphorylation of NSP5 dimer.

The protein resides in the host cytoplasm. Functionally, plays an essential role in the viral genome replication. Participates, together with NSP2, in the formation of viral factories (viroplasms), which are large inclusions in the host cytoplasm where replication intermediates are assembled and viral RNA replication takes place. Orchestrates the recruitment of viroplasmic proteins such as capsid proteins to these factories. Participates in the selective exclusion of host proteins from stress granules (SG) and P bodies (PB). Also participates in the sequestration of these remodeled organelles in viral factories. In Rotavirus A (strain RVA/Human/Japan/K8/1977/G1P3A[9]) (RV-A), this protein is Non-structural protein 5.